We begin with the raw amino-acid sequence, 574 residues long: Septation ring formation regulator EzrA (574 aa).

The Extracellular segment spans residues 1 to 7 (MSSGIIL). Residues 8–26 (LIVAIVLLVIIAYLVGVII) traverse the membrane as a helical segment. Topologically, residues 27–574 (RKRNDSLITS…YEKTREHIRF (548 aa)) are cytoplasmic. 3 coiled-coil regions span residues 102–141 (NFIR…EEKN), 274–350 (ELVT…ETES), and 459–520 (QLEA…SFEA).

This sequence belongs to the EzrA family.

Its subcellular location is the cell membrane. Functionally, negative regulator of FtsZ ring formation; modulates the frequency and position of FtsZ ring formation. Inhibits FtsZ ring formation at polar sites. Interacts either with FtsZ or with one of its binding partners to promote depolymerization. The chain is Septation ring formation regulator EzrA from Streptococcus pyogenes serotype M1.